Here is an 879-residue protein sequence, read N- to C-terminus: DNA replication licensing factor mcm3 (879 aa).

The region spanning 306–513 is the MCM domain; the sequence is VFELLSTSLA…KDRALSEHVL (208 aa). 356 to 363 serves as a coordination point for ATP; the sequence is GDPSTAKS. Residues 488–491 carry the Arginine finger motif; that stretch reads SRFD. The interval 679 to 778 is disordered; that stretch reads RKKHKKQRLE…STLPATSREL (100 aa). The segment covering 690-713 has biased composition (acidic residues); the sequence is GEEFDSEDDNSDDMDIEESEEEMD. The segment covering 732-752 has biased composition (low complexity); the sequence is TSQSQESGSEIGSSIAGTAGS. The span at 754-778 shows a compositional bias: polar residues; sequence NVGTSNTQLSWPSTHSTLPATSREL.

It belongs to the MCM family. As to quaternary structure, component of the mcm2-7 complex. The complex forms a toroidal hexameric ring with the proposed subunit order mcm2-mcm6-mcm4-mcm7-mcm3-mcm5. The heterodimers of mcm4/mcm6 and mcm3/mcm5 interact with mcm2 and mcm7.

It localises to the nucleus. It catalyses the reaction ATP + H2O = ADP + phosphate + H(+). Functionally, acts as a component of the mcm2-7 complex (mcm complex) which is the putative replicative helicase essential for 'once per cell cycle' DNA replication initiation and elongation in eukaryotic cells. The active ATPase sites in the mcm2-7 ring are formed through the interaction surfaces of two neighboring subunits such that a critical structure of a conserved arginine finger motif is provided in trans relative to the ATP-binding site of the Walker A box of the adjacent subunit. The six ATPase active sites, however, are likely to contribute differentially to the complex helicase activity. In Schizosaccharomyces pombe (strain 972 / ATCC 24843) (Fission yeast), this protein is DNA replication licensing factor mcm3 (mcm3).